Reading from the N-terminus, the 97-residue chain is UPF0235 protein APP7_1431 (97 aa).

Belongs to the UPF0235 family.

This chain is UPF0235 protein APP7_1431, found in Actinobacillus pleuropneumoniae serotype 7 (strain AP76).